A 268-amino-acid chain; its full sequence is Inositol polyphosphate multikinase (268 aa).

ATP contacts are provided by residues K27, 86 to 88, and D99; that span reads ENI. Substrate is bound at residue 127–135; it reads TSGSLGFRI. D235 provides a ligand contact to ATP.

It belongs to the inositol phosphokinase (IPK) family.

It localises to the cytoplasm. The protein localises to the nucleus. The enzyme catalyses 1D-myo-inositol 1,4,5-trisphosphate + 2 ATP = 1D-myo-inositol 1,3,4,5,6-pentakisphosphate + 2 ADP + 2 H(+). It catalyses the reaction 1D-myo-inositol 1,4,5-trisphosphate + ATP = 1D-myo-inositol 1,4,5,6-tetrakisphosphate + ADP + H(+). It carries out the reaction 1D-myo-inositol 1,4,5-trisphosphate + ATP = 1D-myo-inositol 1,3,4,5-tetrakisphosphate + ADP + H(+). The catalysed reaction is 1D-myo-inositol 1,4,5,6-tetrakisphosphate + ATP = 1D-myo-inositol 1,3,4,5,6-pentakisphosphate + ADP + H(+). Its function is as follows. Inositol phosphate kinase with both monophosphoinositol and diphosphoinositol polyphosphate synthase activities. Able to phosphorylate inositol 1,4,5-trisphosphate (Ins(1,4,5)P3) on both the carbon-3 and carbon-6 positions to synthesize inositol 1,3,4,5-tetrakisphosphate (Ins(1,3,4,5)P4) and inositol 1,4,5,6-tetrakisphosphate (Ins(1,4,5,6)P4), and then to subsequently phosphorylate and convert either isomer of InsP4 to inositol 1,3,4,5,6-pentakisphosphate (Ins(1,3,4,5,6)P5). Also converts (Ins(1,3,4,5,6)P5) to InsP6. Also has a role in transcription regulation. The catalytic activity is required for PHO gene repression by phosphate and for NCR gene activation in response to nitrogen availability, indicating a role for inositol pyrophosphates in these controls. Inositol polyphosphates may be involved in the regulation of chromatin remodeling of transcription. This is Inositol polyphosphate multikinase (arg82) from Schizosaccharomyces pombe (strain 972 / ATCC 24843) (Fission yeast).